The sequence spans 378 residues: Alpha-galactosidase (378 aa).

The signal sequence occupies residues 1 to 15 (MVKSPGTEDYTRRSL). 2 disulfides stabilise this stretch: cysteine 36/cysteine 68 and cysteine 116/cysteine 147. Catalysis depends on aspartate 145, which acts as the Nucleophile. Substrate is bound at residue 178-182 (EWGEE). Residue aspartate 200 is the Proton donor of the active site.

The protein belongs to the glycosyl hydrolase 27 family.

The enzyme catalyses Hydrolysis of terminal, non-reducing alpha-D-galactose residues in alpha-D-galactosides, including galactose oligosaccharides, galactomannans and galactolipids.. Its function is as follows. Preferentially cleaves alpha-1,3 and alpha-1,4 glycoside linkages. Involved in the hydrolysis of the galactomannan, it splits alpha-linked galactose moieties. It is particularly suitable for the hydrolysis of guar gum to a gum with improved gelling properties. Can cleave terminal alpha-1,3-linked galactose residues responsible for blood group B specificity from the surface of erythrocytes thereby converting these cells serologically to group O. In Coffea arabica (Arabian coffee), this protein is Alpha-galactosidase.